A 573-amino-acid chain; its full sequence is Probable pectinesterase/pectinesterase inhibitor 41 (573 aa).

Positions methionine 1–serine 22 are cleaved as a signal peptide. A pectinesterase inhibitor 41 region spans residues leucine 25 to leucine 184. N-linked (GlcNAc...) asparagine glycans are attached at residues asparagine 29, asparagine 119, asparagine 173, asparagine 264, asparagine 268, asparagine 281, and asparagine 320. The pectinesterase 41 stretch occupies residues valine 259–aspartate 557. Threonine 336 contributes to the substrate binding site. The N-linked (GlcNAc...) asparagine glycan is linked to asparagine 353. Glutamine 366 serves as a coordination point for substrate. The active-site Proton donor; for pectinesterase activity is aspartate 389. A disulfide bond links cysteine 403 and cysteine 423. Residue aspartate 410 is the Nucleophile; for pectinesterase activity of the active site. 2 N-linked (GlcNAc...) asparagine glycosylation sites follow: asparagine 456 and asparagine 469. Substrate contacts are provided by arginine 478 and tryptophan 480. 3 N-linked (GlcNAc...) asparagine glycosylation sites follow: asparagine 520, asparagine 541, and asparagine 547.

This sequence in the N-terminal section; belongs to the PMEI family. The protein in the C-terminal section; belongs to the pectinesterase family. In terms of tissue distribution, expressed in flowers, siliques, floral stems and rosettes leaves.

It localises to the secreted. The protein resides in the cell wall. The catalysed reaction is [(1-&gt;4)-alpha-D-galacturonosyl methyl ester](n) + n H2O = [(1-&gt;4)-alpha-D-galacturonosyl](n) + n methanol + n H(+). The protein operates within glycan metabolism; pectin degradation; 2-dehydro-3-deoxy-D-gluconate from pectin: step 1/5. In terms of biological role, acts in the modification of cell walls via demethylesterification of cell wall pectin. The protein is Probable pectinesterase/pectinesterase inhibitor 41 (PME41) of Arabidopsis thaliana (Mouse-ear cress).